A 765-amino-acid chain; its full sequence is Lysyl oxidase homolog 2 (765 aa).

Residues 1 to 19 form the signal peptide; it reads MLVSHVFLLTLSLSVPSLG. SRCR domains lie at 49-150, 179-293, 317-416, and 426-535; these read VRLA…VQCS, IRPI…VSCT, VRLR…VRCN, and VRLS…VSCV. Cystine bridges form between Cys75–Cys139, Cys88–Cys149, Cys119–Cys129, Cys209–Cys282, Cys222–Cys292, Cys256–Cys266, Cys342–Cys405, Cys355–Cys415, and Cys386–Cys396. Asn279 is a glycosylation site (N-linked (GlcNAc...) asparagine). Asn446 carries an N-linked (GlcNAc...) asparagine glycan. Intrachain disulfides connect Cys455/Cys521, Cys468/Cys534, and Cys502/Cys512. The tract at residues 539–742 is lysyl-oxidase like; that stretch reads PDLVLNAALV…WMYNCHIGGS (204 aa). Ca(2+) contacts are provided by Asp540 and Leu541. 4 disulfides stabilise this stretch: Cys564/Cys616, Cys570/Cys686, Cys648/Cys664, and Cys654/Cys676. 3 residues coordinate Cu cation: His617, His619, and His621. N-linked (GlcNAc...) asparagine glycosylation occurs at Asn635. Residues 644 to 680 constitute a cross-link (lysine tyrosylquinone (Lys-Tyr)); the sequence is KASFCLEDSECEADIQKQYVCANFGEQGITVGCWDLY. The residue at position 680 (Tyr680) is a 2',4',5'-topaquinone. Glu713, Asp715, Asn718, and Asn719 together coordinate Ca(2+). Residues Cys723 and Cys737 are joined by a disulfide bond.

This sequence belongs to the lysyl oxidase family. It depends on Cu cation as a cofactor. Requires lysine tyrosylquinone residue as cofactor. In terms of processing, the lysine tyrosylquinone cross-link (LTQ) is generated by condensation of the epsilon-amino group of a lysine with a topaquinone produced by oxidation of tyrosine.

It localises to the secreted. It is found in the extracellular space. The protein localises to the extracellular matrix. The protein resides in the basement membrane. Its subcellular location is the nucleus. It localises to the chromosome. It is found in the endoplasmic reticulum. It carries out the reaction L-lysyl-[protein] + O2 + H2O = (S)-2-amino-6-oxohexanoyl-[protein] + H2O2 + NH4(+). Mediates the post-translational oxidative deamination of lysine residues on target proteins leading to the formation of deaminated lysine (allysine). Acts as a transcription corepressor and specifically mediates deamination of trimethylated 'Lys-4' of histone H3 (H3K4me3), a specific tag for epigenetic transcriptional activation. Shows no activity against histone H3 when it is trimethylated on 'Lys-9' (H3K9me3) or 'Lys-27' (H3K27me3) or when 'Lys-4' is monomethylated (H3K4me1) or dimethylated (H3K4me2). Also mediates deamination of methylated TAF10, a member of the transcription factor IID (TFIID) complex, which induces release of TAF10 from promoters, leading to inhibition of TFIID-dependent transcription. LOXL2-mediated deamination of TAF10 results in transcriptional repression of genes required for embryonic stem cell pluripotency. Involved in epithelial to mesenchymal transition (EMT) and participates in repression of E-cadherin, probably by mediating deamination of histone H3. When secreted into the extracellular matrix, promotes cross-linking of extracellular matrix proteins by mediating oxidative deamination of peptidyl lysine residues in precursors to fibrous collagen and elastin. Acts as a regulator of sprouting angiogenesis, probably via collagen IV scaffolding. Acts as a regulator of chondrocyte differentiation, probably by regulating expression of factors that control chondrocyte differentiation. This Xenopus laevis (African clawed frog) protein is Lysyl oxidase homolog 2 (loxl2).